A 926-amino-acid chain; its full sequence is Progesterone receptor (926 aa).

A disordered region spans residues 1–48 (MTELQAKDPQVLHTSGASPSPPHIGSPLLARLDSGPFQGSQHSDVSSV). The interval 1-165 (MTELQAKDPQ…PATKGLLSPL (165 aa)) is AF3; mediates transcriptional activation (in isoform B). The tract at residues 1–559 (MTELQAKDPQ…YGFDSLPQKI (559 aa)) is modulating, Pro-Rich. Lys-7 participates in a covalent cross-link: Glycyl lysine isopeptide (Lys-Gly) (interchain with G-Cter in SUMO). Ser-20 is modified (phosphoserine). Positions 56–60 (LDGLL) match the LXXL motif 1 motif. Ser-82 carries the post-translational modification Phosphoserine. Positions 116–120 (LDSLL) match the LXXL motif 1 motif. 2 positions are modified to phosphoserine: Ser-131 and Ser-163. Positions 166–305 (MSRPEIKAGD…LATTVVDFIH (140 aa)) are mediates transcriptional transrepression (in isoform A). The segment at 168–256 (RPEIKAGDSS…GTGSGGGVAA (89 aa)) is disordered. The Nuclear localization signal signature appears at 184 to 188 (KVLPK). 2 positions are modified to phosphoserine: Ser-191 and Ser-214. Ser-294 carries the phosphoserine; by MAPK1 modification. Positions 327-364 (DSYDGGATAQGPFAPPRGSPSAPSPPVPCGDFPDCTYP) are disordered. Pro residues predominate over residues 339–354 (FAPPRGSPSAPSPPVP). Ser-345 carries the phosphoserine; by MAPK modification. A Glycyl lysine isopeptide (Lys-Gly) (interchain with G-Cter in SUMO); alternate cross-link involves residue Lys-388. Residue Lys-388 forms a Glycyl lysine isopeptide (Lys-Gly) (interchain with G-Cter in ubiquitin); alternate linkage. The interval 391–447 (EEGADAAVRSPRPYLSAGASSSTFPDFPLAPAPQRAPSSRPGEAAVAGGPSSAAVSP) is disordered. Ser-400 is subject to Phosphoserine; by CDK2. The span at 422 to 447 (APQRAPSSRPGEAAVAGGPSSAAVSP) shows a compositional bias: low complexity. Residues 453 to 539 (SALECILYKA…VYPPYLNYLR (87 aa)) are AF1; mediates transcriptional activation. A Glycyl lysine isopeptide (Lys-Gly) (interchain with G-Cter in SUMO) cross-link involves residue Lys-524. The segment at residues 557-632 (QKICLICGDE…AGMVLGGRKF (76 aa)) is a DNA-binding region (nuclear receptor). NR C4-type zinc fingers lie at residues 560-580 (CLICGDEASGCHYGVLTCGSC) and 596-615 (CAGRNDCIVDKIRRKNCPAC). The residue at position 669 (Ser-669) is a Phosphoserine. The NR LBD domain maps to 672–906 (QEIQLVPPLI…EFPEMMSEVI (235 aa)). Residues 673 to 926 (EIQLVPPLIN…MVKPLLFHKK (254 aa)) are AF2; mediates transcriptional activation. Arg-759 is a progesterone binding site.

This sequence belongs to the nuclear hormone receptor family. NR3 subfamily. As to quaternary structure, interacts with SMARD1 and UNC45A. Interacts with CUEDC2; the interaction promotes ubiquitination, decreases sumoylation, and represses transcriptional activity. Interacts with PIAS3; the interaction promotes sumoylation of PR in a hormone-dependent manner, inhibits DNA-binding, and alters nuclear export. Interacts with SP1; the interaction requires ligand-induced phosphorylation on Ser-294 by ERK1/2 MAPK. Interacts with PRMT2. Isoform A interacts with NCOR2. Isoform B (but not isoform A) interacts with NCOA2 and NCOA1. Isoform B (but not isoform A) interacts with KLF9. Post-translationally, phosphorylated on multiple serine sites. Several of these sites are hormone-dependent. Phosphorylation on Ser-294 is highly hormone-dependent and modulates ubiquitination and sumoylation on Lys-388. Phosphorylation on Ser-345 also requires induction by hormone. Basal phosphorylation on Ser-82, Ser-163, Ser-191 and Ser-400 is increased in response to progesterone and can be phosphorylated in vitro by the CDK2-A1 complex. Increased levels of phosphorylation on Ser-400 also in the presence of EGF, heregulin, IGF, PMA and FBS. Phosphorylation at this site by CDK2 is ligand-independent, and increases nuclear translocation and transcriptional activity. Phosphorylation at Ser-163 and Ser-294, but not at Ser-191, is impaired during the G(2)/M phase of the cell cycle. Phosphorylation on Ser-345 by ERK1/2 MAPK is required for interaction with SP1. Sumoylation is hormone-dependent and represses transcriptional activity. Sumoylation on all three sites is enhanced by PIAS3. Desumoylated by SENP1. Sumoylation on Lys-388, the main site of sumoylation, is repressed by ubiquitination on the same site, and modulated by phosphorylation at Ser-294. In terms of processing, ubiquitination is hormone-dependent and represses sumoylation on the same site. Promoted by MAPK-mediated phosphorylation on Ser-294. Ubiquitinated by UBR5, leading to its degradation: UBR5 specifically recognizes and binds ligand-bound PGR when it is not associated with coactivators (NCOAs). In presence of NCOAs, the UBR5-degron is not accessible, preventing its ubiquitination and degradation. Post-translationally, palmitoylated by ZDHHC7 and ZDHHC21. Palmitoylation is required for plasma membrane targeting and for rapid intracellular signaling via ERK and AKT kinases and cAMP generation. In terms of tissue distribution, expression of isoform A and isoform B in mammary epithelial cells is temporally and spatially separated during normal mammary gland development. Isoform A and isoform B are expressed in the pituitary. Isoform A and isoform B are differentially expressed in the ovary and oviduct, and the level of expression is dependent on both the cell type and estrous cycle stage.

It localises to the nucleus. The protein localises to the cytoplasm. Functionally, the steroid hormones and their receptors are involved in the regulation of eukaryotic gene expression and affect cellular proliferation and differentiation in target tissues. Depending on the isoform, progesterone receptor functions as a transcriptional activator or repressor. In terms of biological role, ligand-dependent transdominant repressor of steroid hormone receptor transcriptional activity including repression of its isoform B, MR and ER. Transrepressional activity may involve recruitment of corepressor NCOR2. Its function is as follows. Transcriptional activator of several progesteron-dependent promoters in a variety of cell types. Involved in activation of SRC-dependent MAPK signaling on hormone stimulation. The sequence is that of Progesterone receptor (Pgr) from Mus musculus (Mouse).